A 263-amino-acid polypeptide reads, in one-letter code: Palmitoyltransferase ZDHHC21 (263 aa).

The Cytoplasmic portion of the chain corresponds to 1–4; sequence MKMR. The helical transmembrane segment at 5–25 threads the bilayer; the sequence is LHFVVDPMGWFCMSMVFFVWI. The Extracellular segment spans residues 26 to 44; that stretch reads YNSFLIPKLVLLPHYAEGH. The chain crosses the membrane as a helical span at residues 45-65; sequence ITAEPVICYYLASLLCFSALF. The Cytoplasmic segment spans residues 66 to 131; it reads RASTTDPGKL…WINNCVGEDN (66 aa). In terms of domain architecture, DHHC spans 90–140; sequence ELCNKCNMMRPKRSHHCSRCGHCVRRMDHHCPWINNCVGEDNHWLFLQLCF. The active-site S-palmitoyl cysteine intermediate is Cys-120. A helical membrane pass occupies residues 132-152; that stretch reads HWLFLQLCFYTQVLSFYTLVL. Residues 153–181 are Extracellular-facing; that stretch reads DFCQYYYFLPLSSVDQADFAVHHELALLR. The chain crosses the membrane as a helical span at residues 182–202; sequence VSCFMGLIMFGGISSLFYTQV. Topologically, residues 203-263 are cytoplasmic; the sequence is KGILTDTTTI…KLNLTIRSHV (61 aa).

Belongs to the DHHC palmitoyltransferase family.

The protein localises to the golgi apparatus membrane. The protein resides in the golgi apparatus. It is found in the cis-Golgi network membrane. Its subcellular location is the cell membrane. The catalysed reaction is L-cysteinyl-[protein] + hexadecanoyl-CoA = S-hexadecanoyl-L-cysteinyl-[protein] + CoA. Functionally, palmitoyltransferase that catalyzes the addition of palmitate onto various protein substrates. The chain is Palmitoyltransferase ZDHHC21 from Danio rerio (Zebrafish).